The primary structure comprises 335 residues: Nucleoid-associated protein PC1_1634 (335 aa).

It belongs to the YejK family.

The protein localises to the cytoplasm. The protein resides in the nucleoid. The chain is Nucleoid-associated protein PC1_1634 from Pectobacterium carotovorum subsp. carotovorum (strain PC1).